Here is a 393-residue protein sequence, read N- to C-terminus: uncharacterized protein (393 aa).

The Cytoplasmic portion of the chain corresponds to 1 to 17 (MVSKDQTSFNKRWTLGL). A helical membrane pass occupies residues 18–38 (LMLGLVIILWVLSSFLINLIF). Topologically, residues 39–46 (EDDSYRKP) are vacuolar. Residues 47 to 67 (FFITYTNTAAFIFYLFPTAKA) traverse the membrane as a helical segment. Residues 68–132 (VVVNYKDTGR…LYETIKLSAE (65 aa)) are Cytoplasmic-facing. S93 bears the Phosphoserine mark. The chain crosses the membrane as a helical span at residues 133–153 (FCILWFTANLVTNASLAFTSV). At 154–156 (ASQ) the chain is on the vacuolar side. The helical transmembrane segment at 157–176 (TILSTTSSFFTLFIGAICHV) threads the bilayer. Topologically, residues 177–182 (ESLSKS) are cytoplasmic. A helical transmembrane segment spans residues 183–200 (KVLGSFISFVGIIMVTKS). The Vacuolar segment spans residues 201–219 (DSHQRYQRHIADVSGDDND). A helical transmembrane segment spans residues 220 to 240 (AVQVLIGNLLALAGAVLYGVY). At 241–257 (STLLKREVGDETRVNMK) the chain is on the cytoplasmic side. A helical membrane pass occupies residues 258–278 (IFFGFVGLFNLLFLWPSLIVL). The Vacuolar segment spans residues 279–292 (DFFGWEPFSLPKDP). The helical transmembrane segment at 293-313 (KVVVIIFVNCLITFVSDFCWA) threads the bilayer. Topologically, residues 314–321 (KAMLLTSP) are cytoplasmic. Residues 322–342 (LTVTVGLSITIPLAMFGDVIF) traverse the membrane as a helical segment. At 343–345 (KHK) the chain is on the vacuolar side. A helical transmembrane segment spans residues 346 to 366 (TMSALYLFGATLILGSFFIIN). The Cytoplasmic segment spans residues 367 to 393 (KSSEEEHFENSITASNYESVEVPAANN).

Belongs to the TPT transporter family.

Its subcellular location is the vacuole membrane. This is an uncharacterized protein from Saccharomyces cerevisiae (strain ATCC 204508 / S288c) (Baker's yeast).